The chain runs to 700 residues: Calpain-2 catalytic subunit (700 aa).

Position 2 is an N-acetylalanine (alanine 2). A propeptide spans alanine 2–glycine 19 (anchors to the small subunit). Positions leucine 45–threonine 344 constitute a Calpain catalytic domain. Ca(2+)-binding residues include glycine 91 and aspartate 96. The active site involves cysteine 105. Glutamate 175, glutamine 229, and lysine 230 together coordinate Ca(2+). Active-site residues include histidine 262 and asparagine 286. Residues glutamate 292, aspartate 299, and glutamate 323 each coordinate Ca(2+). Residues proline 345–aspartate 514 form a domain III region. Residues glutamate 515–aspartate 529 form a linker region. The domain IV stretch occupies residues isoleucine 530–leucine 700. Positions 542, 545, 547, 552, 585, 587, 589, 591, 596, 615, 617, 619, 621, 626, 658, and 661 each coordinate Ca(2+). 3 EF-hand domains span residues phenylalanine 572–phenylalanine 597, threonine 602–lysine 637, and aspartate 652–leucine 672.

It belongs to the peptidase C2 family. As to quaternary structure, forms a heterodimer with a small (regulatory) subunit (CAPNS1). Interacts with CPEB3; this leads to cleavage of CPEB3. Ca(2+) is required as a cofactor. As to expression, ubiquitous.

It localises to the cytoplasm. The protein resides in the cell membrane. It catalyses the reaction Broad endopeptidase specificity.. Activated by 200-1000 micromolar concentrations of calcium and inhibited by calpastatin. Its function is as follows. Calcium-regulated non-lysosomal thiol-protease which catalyzes limited proteolysis of substrates involved in cytoskeletal remodeling and signal transduction. Proteolytically cleaves MYOC at 'Arg-226'. Proteolytically cleaves CPEB3 following neuronal stimulation which abolishes CPEB3 translational repressor activity, leading to translation of CPEB3 target mRNAs. The protein is Calpain-2 catalytic subunit (CAPN2) of Bos taurus (Bovine).